A 285-amino-acid polypeptide reads, in one-letter code: Eukaryotic translation initiation factor 3 subunit F-2 (285 aa).

The region spanning 11-145 is the MPN domain; that stretch reads VFIKPLVLFQ…TRLYCAVEIG (135 aa).

Belongs to the eIF-3 subunit F family. In terms of assembly, component of the eukaryotic translation initiation factor 3 (eIF-3) complex. The eIF-3 complex interacts with pix.

Its subcellular location is the cytoplasm. Its function is as follows. Component of the eukaryotic translation initiation factor 3 (eIF-3) complex, which is involved in protein synthesis of a specialized repertoire of mRNAs and, together with other initiation factors, stimulates binding of mRNA and methionyl-tRNAi to the 40S ribosome. The eIF-3 complex specifically targets and initiates translation of a subset of mRNAs involved in cell proliferation. This Drosophila yakuba (Fruit fly) protein is Eukaryotic translation initiation factor 3 subunit F-2.